We begin with the raw amino-acid sequence, 134 residues long: Small ribosomal subunit protein uS8c (134 aa).

Belongs to the universal ribosomal protein uS8 family. In terms of assembly, part of the 30S ribosomal subunit.

It localises to the plastid. In terms of biological role, one of the primary rRNA binding proteins, it binds directly to 16S rRNA central domain where it helps coordinate assembly of the platform of the 30S subunit. In Cuscuta reflexa (Southern Asian dodder), this protein is Small ribosomal subunit protein uS8c (rps8).